Here is a 171-residue protein sequence, read N- to C-terminus: MNLQQQLAYCQQHQQRLQLRHFDNETAWQLGEKIKRQAEKQGVALAIDITVNHQTLFSYAMAGTCAENQDWLRRKRNVVELLSTSSYAAGLMLQQRETSLDARYGVSLRDYAALGGAFPLQIKQAGIIGSVNVSGAPHLDDHNLLLQVLADFIGLPTGSIELLTPLTPLSV.

It belongs to the UPF0303 family.

The polypeptide is UPF0303 protein YPTS_2661 (Yersinia pseudotuberculosis serotype IB (strain PB1/+)).